The chain runs to 175 residues: CASP-like protein 2C1 (175 aa).

The Cytoplasmic segment spans residues methionine 1–threonine 7. A helical membrane pass occupies residues glutamate 8–leucine 28. Residues aspartate 29–glutamate 51 lie on the Extracellular side of the membrane. The chain crosses the membrane as a helical span at residues alanine 52–tryptophan 72. Residues tyrosine 73–glutamine 91 lie on the Cytoplasmic side of the membrane. The chain crosses the membrane as a helical span at residues threonine 92–valine 112. The Extracellular portion of the chain corresponds to threonine 113 to serine 136. The helical transmembrane segment at alanine 137 to phenylalanine 157 threads the bilayer. At asparagine 158–serine 175 the chain is on the cytoplasmic side.

It belongs to the Casparian strip membrane proteins (CASP) family. Homodimer and heterodimers.

It localises to the cell membrane. In Arabidopsis lyrata subsp. lyrata (Lyre-leaved rock-cress), this protein is CASP-like protein 2C1.